The chain runs to 153 residues: MKLVEIFTDGSCLGNPGKGGIGIVLRYNGHEKQVSKGYLQTTNNRMELRAVIEALAMLKEPCQVQLNSDSQYMKDGITKWIFSWKKNNWKTANGKPVKNKELWIALDQEIQRHKIEWTWVKGHSGHRENEICDELAKAGANNPTLEDIGYNAD.

Residues 1–141 enclose the RNase H type-1 domain; the sequence is MKLVEIFTDG…CDELAKAGAN (141 aa). Mg(2+) is bound by residues Asp9, Glu47, Asp69, and Asp133.

Belongs to the RNase H family. Monomer. Mg(2+) serves as cofactor.

Its subcellular location is the cytoplasm. It catalyses the reaction Endonucleolytic cleavage to 5'-phosphomonoester.. Its function is as follows. Endonuclease that specifically degrades the RNA of RNA-DNA hybrids. This chain is Ribonuclease H, found in Actinobacillus pleuropneumoniae serotype 5b (strain L20).